The chain runs to 215 residues: Glycerol-3-phosphate acyltransferase (215 aa).

Transmembrane regions (helical) follow at residues 3–23 (LILL…LWIG), 42–61 (TNTF…LIDI), 68–90 (TLLP…FAVL), 110–130 (AGVL…VFVL), 134–154 (LFSM…ISVL), and 162–182 (LLPS…AIII).

The protein belongs to the PlsY family. As to quaternary structure, probably interacts with PlsX.

The protein localises to the cell membrane. The enzyme catalyses an acyl phosphate + sn-glycerol 3-phosphate = a 1-acyl-sn-glycero-3-phosphate + phosphate. It functions in the pathway lipid metabolism; phospholipid metabolism. Catalyzes the transfer of an acyl group from acyl-phosphate (acyl-PO(4)) to glycerol-3-phosphate (G3P) to form lysophosphatidic acid (LPA). This enzyme utilizes acyl-phosphate as fatty acyl donor, but not acyl-CoA or acyl-ACP. The protein is Glycerol-3-phosphate acyltransferase of Streptococcus equi subsp. equi (strain 4047).